The sequence spans 463 residues: MLKIYNTLTRQKEEFKPIHPGKVGMYVCGVTIYDLCHIGHGRTFVAFDVVVRYLRYLGYDVTFVRNITDVDDKIIKRAAENAESCDALTERLIGDMHADFDALKLQRPDIEPRATQHIGEIITLVQSLLDQNYAYVADSGDVLFSIDSFPEYGRLSGQNIEQLQAGARVDVEESKRNPMDFVLWKMSKPGEPMWDSPWGAGRPGWHIECSAMNSKHLGHHFDIHGGGSDLQFPHHENEIAQSCCAHHTPYVNTWMHSGMVMVDEEKMSKSLGNFFTIRDVLKVYDAETVRYFLMSGHYRSPLNYSDLNLQQARASLERLYTALRGVEDGEEQAALSAPFDERFKAAMDDDFNTPEAYSVLFDLARDLNRAKQDSPADAVALAACLRRLGGVLGLLQQQPEQFLQSGAAAETDDVAEIELLIKTRNDARASKNWALADEARNKLTEMGIVLEDGPQGTTWRRKG.

C28 serves as a coordination point for Zn(2+). Positions 30–40 (VTIYDLCHIGH) match the 'HIGH' region motif. Zn(2+)-binding residues include C209, H234, and E238. Residues 266-270 (KMSKS) carry the 'KMSKS' region motif. ATP is bound at residue K269.

This sequence belongs to the class-I aminoacyl-tRNA synthetase family. Monomer. It depends on Zn(2+) as a cofactor.

The protein resides in the cytoplasm. The catalysed reaction is tRNA(Cys) + L-cysteine + ATP = L-cysteinyl-tRNA(Cys) + AMP + diphosphate. The sequence is that of Cysteine--tRNA ligase from Tolumonas auensis (strain DSM 9187 / NBRC 110442 / TA 4).